The sequence spans 308 residues: ADP-L-glycero-D-manno-heptose-6-epimerase (308 aa).

Residues 10–11, 31–32, Lys-38, Lys-53, 75–79, and Asn-92 each bind NADP(+); these read MI, DN, and EGACS. Catalysis depends on Tyr-139, which acts as the Proton acceptor. Residue Lys-143 coordinates NADP(+). Position 168 (Asn-168) interacts with substrate. The NADP(+) site is built by Val-169 and Lys-177. The active-site Proton acceptor is Lys-177. Substrate is bound by residues Ser-179, His-186, 200 to 203, Arg-208, and Tyr-271; that span reads FAGS.

This sequence belongs to the NAD(P)-dependent epimerase/dehydratase family. HldD subfamily. In terms of assembly, homopentamer. The cofactor is NADP(+).

It carries out the reaction ADP-D-glycero-beta-D-manno-heptose = ADP-L-glycero-beta-D-manno-heptose. The protein operates within nucleotide-sugar biosynthesis; ADP-L-glycero-beta-D-manno-heptose biosynthesis; ADP-L-glycero-beta-D-manno-heptose from D-glycero-beta-D-manno-heptose 7-phosphate: step 4/4. Its function is as follows. Catalyzes the interconversion between ADP-D-glycero-beta-D-manno-heptose and ADP-L-glycero-beta-D-manno-heptose via an epimerization at carbon 6 of the heptose. In Mannheimia succiniciproducens (strain KCTC 0769BP / MBEL55E), this protein is ADP-L-glycero-D-manno-heptose-6-epimerase.